A 223-amino-acid chain; its full sequence is Putative synaptogyrin-2 like protein (223 aa).

At M1 the chain carries N-acetylmethionine. Phosphoserine is present on S3. An MARVEL domain is found at 20–170; it reads FLTQPQVVAR…LASLTYQRYK (151 aa). Helical transmembrane passes span 26–46, 71–91, 104–124, and 146–166; these read VVAR…IYGE, GSAI…DAYF, VIGD…GFCF, and AAIT…SLTY. The disordered stretch occupies residues 197 to 223; sequence ASVDNYQQPPFTQNAETTEGYQPPPVY. Positions 200 to 216 are enriched in polar residues; sequence DNYQQPPFTQNAETTEG.

It belongs to the synaptogyrin family.

The protein resides in the membrane. This chain is Putative synaptogyrin-2 like protein, found in Homo sapiens (Human).